The sequence spans 111 residues: ATP-dependent Clp protease adapter protein ClpS (111 aa).

This sequence belongs to the ClpS family. Binds to the N-terminal domain of the chaperone ClpA.

In terms of biological role, involved in the modulation of the specificity of the ClpAP-mediated ATP-dependent protein degradation. This chain is ATP-dependent Clp protease adapter protein ClpS, found in Legionella pneumophila (strain Paris).